A 336-amino-acid chain; its full sequence is tRNA-dihydrouridine(20/20a) synthase (336 aa).

FMN contacts are provided by residues 24–26 (PMM) and Gln77. Cys107 (proton donor) is an active-site residue. FMN is bound by residues Lys146, His178, 218-220 (NGG), and 240-241 (GR).

Belongs to the Dus family. DusA subfamily. The cofactor is FMN.

The catalysed reaction is 5,6-dihydrouridine(20) in tRNA + NADP(+) = uridine(20) in tRNA + NADPH + H(+). It carries out the reaction 5,6-dihydrouridine(20) in tRNA + NAD(+) = uridine(20) in tRNA + NADH + H(+). The enzyme catalyses 5,6-dihydrouridine(20a) in tRNA + NADP(+) = uridine(20a) in tRNA + NADPH + H(+). It catalyses the reaction 5,6-dihydrouridine(20a) in tRNA + NAD(+) = uridine(20a) in tRNA + NADH + H(+). Functionally, catalyzes the synthesis of 5,6-dihydrouridine (D), a modified base found in the D-loop of most tRNAs, via the reduction of the C5-C6 double bond in target uridines. Specifically modifies U20 and U20a in tRNAs. The sequence is that of tRNA-dihydrouridine(20/20a) synthase from Pseudomonas putida (strain ATCC 47054 / DSM 6125 / CFBP 8728 / NCIMB 11950 / KT2440).